A 427-amino-acid polypeptide reads, in one-letter code: 3-phosphoshikimate 1-carboxyvinyltransferase (427 aa).

3 residues coordinate 3-phosphoshikimate: lysine 20, serine 21, and arginine 25. Lysine 20 lines the phosphoenolpyruvate pocket. Residues glycine 92 and arginine 120 each coordinate phosphoenolpyruvate. 3-phosphoshikimate contacts are provided by serine 166, glutamine 168, aspartate 312, and lysine 339. Phosphoenolpyruvate is bound at residue glutamine 168. Aspartate 312 serves as the catalytic Proton acceptor. The phosphoenolpyruvate site is built by arginine 343 and arginine 385.

Belongs to the EPSP synthase family. Monomer.

Its subcellular location is the cytoplasm. It catalyses the reaction 3-phosphoshikimate + phosphoenolpyruvate = 5-O-(1-carboxyvinyl)-3-phosphoshikimate + phosphate. It participates in metabolic intermediate biosynthesis; chorismate biosynthesis; chorismate from D-erythrose 4-phosphate and phosphoenolpyruvate: step 6/7. In terms of biological role, catalyzes the transfer of the enolpyruvyl moiety of phosphoenolpyruvate (PEP) to the 5-hydroxyl of shikimate-3-phosphate (S3P) to produce enolpyruvyl shikimate-3-phosphate and inorganic phosphate. This is 3-phosphoshikimate 1-carboxyvinyltransferase from Streptococcus thermophilus (strain ATCC BAA-491 / LMD-9).